The sequence spans 1567 residues: ABC multidrug transporter MDR1 (1567 aa).

The segment covering 1–11 (MASQPPQPPSG) has biased composition (pro residues). A disordered region spans residues 1 to 37 (MASQPPQPPSGQPDTQYEEYQSEVITETTNRPTPAAD). The span at 22 to 32 (SEVITETTNRP) shows a compositional bias: polar residues. N-linked (GlcNAc...) asparagine glycans are attached at residues Asn149, Asn157, and Asn356. Residues 167 to 432 (VQYQDTFLSP…FEEMGWYCPP (266 aa)) form the ABC transporter 1 domain. The next 6 membrane-spanning stretches (helical) occupy residues 543–563 (STIA…SLFF), 571–591 (GFFA…LMSI), 636–656 (IPIK…LGGL), 661–681 (AKFF…SAIF), 691–711 (IPQA…YTGF), and 798–818 (LGIL…VSEL). N-linked (GlcNAc...) asparagine glycosylation is found at Asn819, Asn895, and Asn912. The 244-residue stretch at 891–1134 (FTWRNVTYDI…LLNYFETHGA (244 aa)) folds into the ABC transporter 2 domain. 927–934 (GVSGAGKT) contributes to the ATP binding site. The interval 1172–1202 (ESRHVQQELDRIQSETSKRNEGHGQSAEKEP) is disordered. Residues 1231 to 1251 (IWGKLLLGLTSALFIGFSFFL) traverse the membrane as a helical segment. A glycan (N-linked (GlcNAc...) asparagine) is linked at Asn1253. The next 5 membrane-spanning stretches (helical) occupy residues 1257-1277 (AGLQ…SSLV), 1305-1325 (VFLL…GIIA), 1345-1365 (ILLL…QMII), 1372-1392 (ETAG…NGVL), and 1498-1518 (GIGW…YYLI).

This sequence belongs to the ABC transporter superfamily. ABCG family. PDR (TC 3.A.1.205) subfamily.

Its subcellular location is the cell membrane. The enzyme catalyses voriconazole(in) + ATP + H2O = voriconazole(out) + ADP + phosphate + H(+). It carries out the reaction fluconazole(in) + ATP + H2O = fluconazole(out) + ADP + phosphate + H(+). The catalysed reaction is (R)-miconazole(in) + ATP + H2O = (R)-miconazole(out) + ADP + phosphate + H(+). It catalyses the reaction (S)-miconazole(in) + ATP + H2O = (S)-miconazole(out) + ADP + phosphate + H(+). Its function is as follows. Pleiotropic ABC efflux transporter that may be involved in the modulation susceptibility to a wide range of unrelated cytotoxic compounds. The sequence is that of ABC multidrug transporter MDR1 from Trichophyton equinum (strain ATCC MYA-4606 / CBS 127.97) (Horse ringworm fungus).